Here is a 610-residue protein sequence, read N- to C-terminus: Putative sensor histidine kinase NtrY-like (610 aa).

4 helical membrane-spanning segments follow: residues 18–38, 49–69, 92–112, and 292–312; these read IGIL…TISI, KVIW…ILLT, IVVA…ISSA, and IIFI…GVIV. The 55-residue stretch at 314 to 368 folds into the HAMP domain; the sequence is AKIVNPIKKLVIATDKVKSGDLTVQVPENEVDKDEIGTLYAAFNRMIKQLSRQQR. Residues 385 to 596 enclose the Histidine kinase domain; that stretch reads KVAHEIKNPL…VIDIRFNLEE (212 aa). A Phosphohistidine; by autocatalysis modification is found at His-388.

It is found in the cell membrane. The catalysed reaction is ATP + protein L-histidine = ADP + protein N-phospho-L-histidine.. Member of the two-component regulatory system RBE_0470/RBE_0312. This is Putative sensor histidine kinase NtrY-like from Rickettsia bellii (strain RML369-C).